Here is a 397-residue protein sequence, read N- to C-terminus: F-box protein At5g25290 (397 aa).

Residues 11-56 (VTLWSEIPMDILRSVFERLSFVDLHRAKIVCSHWYSCSKQSFLRKT) enclose the F-box domain.

This is F-box protein At5g25290 from Arabidopsis thaliana (Mouse-ear cress).